A 448-amino-acid chain; its full sequence is Mitochondrial distribution and morphology protein 10 (448 aa).

This sequence belongs to the MDM10 family. As to quaternary structure, component of the ER-mitochondria encounter structure (ERMES) or MDM complex, composed of MMM1, MDM10, MDM12 and MDM34. Associates with the mitochondrial outer membrane sorting assembly machinery SAM(core) complex.

Its subcellular location is the mitochondrion outer membrane. Component of the ERMES/MDM complex, which serves as a molecular tether to connect the endoplasmic reticulum and mitochondria. Components of this complex are involved in the control of mitochondrial shape and protein biogenesis and may function in phospholipid exchange. MDM10 is involved in the late assembly steps of the general translocase of the mitochondrial outer membrane (TOM complex). Functions in the TOM40-specific route of the assembly of outer membrane beta-barrel proteins, including the association of TOM40 with the receptor TOM22 and small TOM proteins. Can associate with the SAM(core) complex as well as the MDM12-MMM1 complex, both involved in late steps of the major beta-barrel assembly pathway, that is responsible for biogenesis of all outer membrane beta-barrel proteins. May act as a switch that shuttles between both complexes and channels precursor proteins into the TOM40-specific pathway. Plays a role in mitochondrial morphology and in the inheritance of mitochondria. The polypeptide is Mitochondrial distribution and morphology protein 10 (Zygosaccharomyces rouxii (strain ATCC 2623 / CBS 732 / NBRC 1130 / NCYC 568 / NRRL Y-229)).